A 432-amino-acid polypeptide reads, in one-letter code: Neuronal pentraxin-1 (432 aa).

A signal peptide spans 1–22 (MLAGRAARTCALLALCLLGSRA). Positions 90-128 (ESQSTLDAGPGEARSGGGRKQPGSGKNTMGDLSRTPASE) are disordered. 2 N-linked (GlcNAc...) asparagine glycosylation sites follow: Asn154 and Asn193. Positions 226–428 (DKFQLTFPLR…GATKWTFEAC (203 aa)) constitute a Pentraxin (PTX) domain. Cys256 and Cys316 are joined by a disulfide. Asn280, Glu358, Gln359, Asp360, and Gln370 together coordinate Ca(2+).

As to quaternary structure, homooligomer or heterooligomer (probably pentamer) with neuronal pentraxin receptor (NPTXR). Requires Ca(2+) as cofactor. In terms of processing, glycosylated. As to expression, cerebellum, hippocampus and cerebral cortex.

It is found in the secreted. The protein localises to the cytoplasmic vesicle. The protein resides in the secretory vesicle. Its subcellular location is the endoplasmic reticulum. In terms of biological role, may be involved in mediating uptake of synaptic material during synapse remodeling or in mediating the synaptic clustering of AMPA glutamate receptors at a subset of excitatory synapses. This is Neuronal pentraxin-1 (Nptx1) from Rattus norvegicus (Rat).